The primary structure comprises 231 residues: NADH-ubiquinone oxidoreductase chain 4 (231 aa).

Transmembrane regions (helical) follow at residues 1 to 21 (PIAGSMVLAAILLKLGGYGII), 34 to 54 (LFLPFIVLALWGAILANLTCL), 63 to 85 (IAYSSISHMGLVVAAIIIQTPWG), 89 to 111 (AMALMIAHGFTSSALFCLANTTY), 128 to 148 (ILPMTTTWWLMTNLMNIAIPP), and 156 to 176 (LLIMSALFNWCPATIIMLGLS).

Belongs to the complex I subunit 4 family.

It is found in the mitochondrion membrane. The enzyme catalyses a ubiquinone + NADH + 5 H(+)(in) = a ubiquinol + NAD(+) + 4 H(+)(out). Functionally, core subunit of the mitochondrial membrane respiratory chain NADH dehydrogenase (Complex I) that is believed to belong to the minimal assembly required for catalysis. Complex I functions in the transfer of electrons from NADH to the respiratory chain. The immediate electron acceptor for the enzyme is believed to be ubiquinone. In Crotalus concolor (Midget faded rattlesnake), this protein is NADH-ubiquinone oxidoreductase chain 4 (MT-ND4).